The primary structure comprises 46 residues: Cystatin WCPI-3 (46 aa).

Residues 35–38 (VVAG) carry the Secondary area of contact motif.

The protein belongs to the cystatin family. Phytocystatin subfamily.

Functionally, inhibitor of papain. In Wisteria floribunda (Japanese wisteria), this protein is Cystatin WCPI-3.